Consider the following 141-residue polypeptide: UPF0102 protein BRADO0179 (141 aa).

A disordered region spans residues 1-24 (MAETDRATDKPAGAPKPAKTASPE). The span at 10 to 19 (KPAGAPKPAK) shows a compositional bias: low complexity.

This sequence belongs to the UPF0102 family.

The sequence is that of UPF0102 protein BRADO0179 from Bradyrhizobium sp. (strain ORS 278).